We begin with the raw amino-acid sequence, 566 residues long: Hemocyanin B chain (566 aa).

Cys82 and Cys87 are oxidised to a cystine. Residues His183, His187, His213, His309, His313, and His347 each contribute to the Cu cation site.

Belongs to the tyrosinase family. Hemocyanin subfamily. In terms of tissue distribution, hemolymph.

The protein localises to the secreted. It localises to the extracellular space. Functionally, hemocyanins are copper-containing oxygen carriers occurring freely dissolved in the hemolymph of many mollusks and arthropods. In Astacus leptodactylus (Turkish narrow-clawed crayfish), this protein is Hemocyanin B chain.